The primary structure comprises 543 residues: Mitochondrial distribution and morphology protein 34 (543 aa).

Residues 1–202 enclose the SMP-LTD domain; sequence MSFNVNWNSL…LPTLLHKVSL (202 aa). The tract at residues 519-543 is disordered; sequence AFSHNDPSITPFELPPPPYHQLSRA.

It belongs to the MDM34 family. As to quaternary structure, component of the ER-mitochondria encounter structure (ERMES) or MDM complex, composed of MMM1, MDM10, MDM12 and MDM34.

Its subcellular location is the mitochondrion outer membrane. Component of the ERMES/MDM complex, which serves as a molecular tether to connect the endoplasmic reticulum (ER) and mitochondria. Components of this complex are involved in the control of mitochondrial shape and protein biogenesis, and function in nonvesicular lipid trafficking between the ER and mitochondria. MDM34 is required for the interaction of the ER-resident membrane protein MMM1 and the outer mitochondrial membrane-resident beta-barrel protein MDM10. This is Mitochondrial distribution and morphology protein 34 from Clavispora lusitaniae (strain ATCC 42720) (Yeast).